The sequence spans 418 residues: Acetylornithine aminotransferase (418 aa).

Pyridoxal 5'-phosphate is bound by residues 116-117 and phenylalanine 149; that span reads GA. Residue arginine 152 coordinates N(2)-acetyl-L-ornithine. 240-243 is a binding site for pyridoxal 5'-phosphate; sequence DEVQ. Lysine 269 is modified (N6-(pyridoxal phosphate)lysine). Residue serine 296 coordinates N(2)-acetyl-L-ornithine. A pyridoxal 5'-phosphate-binding site is contributed by threonine 297.

It belongs to the class-III pyridoxal-phosphate-dependent aminotransferase family. ArgD subfamily. Homodimer. Requires pyridoxal 5'-phosphate as cofactor.

Its subcellular location is the cytoplasm. The enzyme catalyses N(2)-acetyl-L-ornithine + 2-oxoglutarate = N-acetyl-L-glutamate 5-semialdehyde + L-glutamate. It functions in the pathway amino-acid biosynthesis; L-arginine biosynthesis; N(2)-acetyl-L-ornithine from L-glutamate: step 4/4. The protein is Acetylornithine aminotransferase of Prochlorococcus marinus (strain MIT 9313).